Here is a 253-residue protein sequence, read N- to C-terminus: 5'-nucleotidase SurE (253 aa).

Residues Asp-8, Asp-9, Ser-40, and Asn-93 each contribute to the a divalent metal cation site.

The protein belongs to the SurE nucleotidase family. A divalent metal cation serves as cofactor.

The protein localises to the cytoplasm. It carries out the reaction a ribonucleoside 5'-phosphate + H2O = a ribonucleoside + phosphate. Nucleotidase that shows phosphatase activity on nucleoside 5'-monophosphates. This Methylobacterium sp. (strain 4-46) protein is 5'-nucleotidase SurE.